A 523-amino-acid chain; its full sequence is Pituitary adenylate cyclase-activating polypeptide type I receptor (523 aa).

Positions 1-19 (MARVLQLSLTALLLPVAIA) are cleaved as a signal peptide. Residues 20–151 (MHSDCIFKKE…SGDQDYYYLS (132 aa)) lie on the Extracellular side of the membrane. Cystine bridges form between Cys-33–Cys-62, Cys-53–Cys-117, and Cys-76–Cys-133. N-linked (GlcNAc...) asparagine glycosylation is found at Asn-47, Asn-59, and Asn-116. An important for ADCYAP1/PACAP ligand binding and specificity region spans residues 124–138 (EPFPHYFDACGFDDY). The segment at 124-138 (EPFPHYFDACGFDDY) is important for ligand binding and specificity. A helical membrane pass occupies residues 152–176 (VKALYTVGYSTSLATLTTAMVILCR). Residues 177 to 186 (FRKLHCTRNF) are Cytoplasmic-facing. Residues 187-207 (IHMNLFVSFMLRAISVFIKDW) form a helical membrane-spanning segment. Over 208–222 (ILYAEQDSSHCFVST) the chain is Extracellular. The helical transmembrane segment at 223-248 (VECKAVMVFFHYCVVSNYFWLFIEGL) threads the bilayer. A disulfide bond links Cys-225 and Cys-295. The Cytoplasmic segment spans residues 249 to 266 (YLFTLLVETFFPERRYFY). The chain crosses the membrane as a helical span at residues 267 to 289 (WYTIIGWGTPTVCVTVWAVLRLY). Residues 290–301 (FDDAGCWDMNDS) are Extracellular-facing. The helical transmembrane segment at 302-328 (TALWWVIKGPVVGSIMVNFVLFIGIII) threads the bilayer. The Cytoplasmic segment spans residues 329 to 346 (ILVQKLQSPDMGGNESSI). The chain crosses the membrane as a helical span at residues 347 to 429 (YLTNLRLRVP…HYTVFAFSPE (83 aa)). The Extracellular segment spans residues 430 to 434 (NVSKR). Residues 435–458 (ERLVFELGLGSFQGFVVAVLYCFL) traverse the membrane as a helical segment. Over 459–523 (NGEVQAEIKR…SSLPADNLAT (65 aa)) the chain is Cytoplasmic. Residues Ser-489 and Ser-502 each carry the phosphoserine modification.

This sequence belongs to the G-protein coupled receptor 2 family. As to quaternary structure, interacts with maxadilan, a vasodilator peptide from Lutzomyia longipalpis saliva; the interaction results in ADCYAP1R1 activation. Hypothalamus, anterior pituitary, adrenal medulla, testicular germ cells.

The protein localises to the cell membrane. Functionally, g protein-coupled receptor activated by the neuropeptide pituitary adenylate cyclase-activating polypeptide (ADCYAP1/PACAP). Binds both PACAP27 and PACAP38 bioactive peptides. Ligand binding causes a conformation change that triggers signaling via guanine nucleotide-binding proteins (G proteins) and modulates the activity of downstream effectors. Activates cAMP-dependent pathway. May regulate the release of adrenocorticotropin, luteinizing hormone, growth hormone, prolactin, epinephrine, and catecholamine. May play a role in spermatogenesis and sperm motility. Causes smooth muscle relaxation and secretion in the gastrointestinal tract. The polypeptide is Pituitary adenylate cyclase-activating polypeptide type I receptor (Rattus norvegicus (Rat)).